The primary structure comprises 759 residues: Glycerol-3-phosphate O-acyltransferase 1 (759 aa).

Residues M1–K48 are Lumenal-facing. A helical transmembrane segment spans residues I49 to I69. Topologically, residues R70 to G434 are cytoplasmic. The HXXXXD motif motif lies at H414–D419. Residues L435 to L449 traverse the membrane as a helical segment. Position 450 (A450) is a topological domain, lumenal. Residues M451 to K465 form a helical membrane-spanning segment. At R466–K493 the chain is on the cytoplasmic side. A helical transmembrane segment spans residues I494 to Y514. Residues Y515 to K523 lie on the Lumenal side of the membrane. The chain crosses the membrane as a helical span at residues I524–V544. Topologically, residues G545–A759 are cytoplasmic. 3 disordered regions span residues E613–N667, R684–V705, and I729–A759. Basic and acidic residues predominate over residues R647–D659. Low complexity predominate over residues S688–E702. The segment covering E736–A759 has biased composition (acidic residues).

Belongs to the GPAT/DAPAT family.

Its subcellular location is the endoplasmic reticulum membrane. The enzyme catalyses sn-glycerol 3-phosphate + an acyl-CoA = a 1-acyl-sn-glycero-3-phosphate + CoA. The catalysed reaction is dihydroxyacetone phosphate + an acyl-CoA = a 1-acylglycerone 3-phosphate + CoA. It carries out the reaction sn-glycerol 3-phosphate + hexadecanoyl-CoA = 1-hexadecanoyl-sn-glycero-3-phosphate + CoA. It catalyses the reaction (9Z)-hexadecenoyl-CoA + sn-glycerol 3-phosphate = 1-(9Z-hexadecenoyl)-sn-glycero-3-phosphate + CoA. The enzyme catalyses sn-glycerol 3-phosphate + octadecanoyl-CoA = 1-octadecanoyl-sn-glycero-3-phosphate + CoA. The catalysed reaction is sn-glycerol 3-phosphate + (9Z)-octadecenoyl-CoA = 1-(9Z-octadecenoyl)-sn-glycero-3-phosphate + CoA. It participates in phospholipid metabolism; CDP-diacylglycerol biosynthesis; CDP-diacylglycerol from sn-glycerol 3-phosphate: step 1/3. Dual substrate-specific glycerol-3-phosphate/dihydroxyacetone phosphate sn-1 acyltransferase, catalyzing the first and committed reaction in the de novo synthesis of glycerophospholipids and triacylglycerols (TAGs). Prefers Gly-3-P over dihydroxyacetone phosphate and has a marked preference for 16-carbon fatty acyl chains. Transfers a fatty acid from fatty acyl-CoA to the sn-1 position of glycerol-3-phosphate to produce lysophosphatidic acid (LysoPA). These lipids not only are precursors of glycerolipids, but also are dynamic components of signal transduction systems that control cell physiology. SCT1 is the primary supplier of diacylglycerols (DAG), used mainly in TAG synthesis and phosphatidylcholine (PC) synthesis through the CDP-choline pathway. Regulates fatty acid desaturation, that is, the ratio of unsaturated versus saturated fatty acyl chains, by competing with the desaturase OLE1 for the common substrate C16:0-CoA. Sequesters C16:0-CoA into lipids, thereby shielding it from desaturation by OLE1. The polypeptide is Glycerol-3-phosphate O-acyltransferase 1 (Saccharomyces cerevisiae (strain ATCC 204508 / S288c) (Baker's yeast)).